A 343-amino-acid chain; its full sequence is Protein pelota homolog (343 aa).

Belongs to the eukaryotic release factor 1 family. Pelota subfamily. In terms of assembly, monomer. The cofactor is a divalent metal cation.

It is found in the cytoplasm. May function in recognizing stalled ribosomes, interact with stem-loop structures in stalled mRNA molecules, and effect endonucleolytic cleavage of the mRNA. May play a role in the release non-functional ribosomes and degradation of damaged mRNAs. Has endoribonuclease activity. The sequence is that of Protein pelota homolog from Cenarchaeum symbiosum (strain A).